A 308-amino-acid polypeptide reads, in one-letter code: Olfactory receptor 13H1 (308 aa).

The Extracellular portion of the chain corresponds to 1-25 (MAMDNVTAVFQFLLIGISNYPQWRD). Asn-5 is a glycosylation site (N-linked (GlcNAc...) asparagine). A helical transmembrane segment spans residues 26–46 (TFFTLVLIIYLSTLLGNGFMI). Topologically, residues 47-54 (FLIHFDPN) are cytoplasmic. A helical membrane pass occupies residues 55–75 (LHTPIYFFLSNLSFLDLCYGT). At 76–99 (ASMPQALVHCFSTHPYLSYPRCLA) the chain is on the extracellular side. A disulfide bridge connects residues Cys-97 and Cys-188. Residues 100–120 (QTSVSLALATAECLLLAAMAY) traverse the membrane as a helical segment. At 121–139 (DRVVAISNPLRYSVVMNGP) the chain is on the cytoplasmic side. The chain crosses the membrane as a helical span at residues 140 to 159 (VCVCLVATSWGTSLVLTAML). The Extracellular portion of the chain corresponds to 160–196 (ILSLRLHFCGANVINHFACEILSLIKLTCSDTSLNEF). A helical transmembrane segment spans residues 197–216 (MILITSIFTLLLPFGFVLLS). The Cytoplasmic segment spans residues 217–236 (YIRIAMAIIRIRSLQGRLKA). The chain crosses the membrane as a helical span at residues 237–257 (FTTCGSHLTVVTIFYGSAISM). Over 258–270 (YMKTQSKSYPDQD) the chain is Extracellular. A helical transmembrane segment spans residues 271–291 (KFISVFYGALTPMLNPLIYSL). The Cytoplasmic segment spans residues 292–308 (RKKDVKRAIRKVMLKRT).

The protein belongs to the G-protein coupled receptor 1 family.

The protein localises to the cell membrane. Its function is as follows. Odorant receptor. The protein is Olfactory receptor 13H1 (OR13H1) of Homo sapiens (Human).